Consider the following 239-residue polypeptide: 1-(5-phosphoribosyl)-5-[(5-phosphoribosylamino)methylideneamino] imidazole-4-carboxamide isomerase (239 aa).

Asp-9 (proton acceptor) is an active-site residue. Asp-131 functions as the Proton donor in the catalytic mechanism.

Belongs to the HisA/HisF family.

The protein resides in the cytoplasm. The catalysed reaction is 1-(5-phospho-beta-D-ribosyl)-5-[(5-phospho-beta-D-ribosylamino)methylideneamino]imidazole-4-carboxamide = 5-[(5-phospho-1-deoxy-D-ribulos-1-ylimino)methylamino]-1-(5-phospho-beta-D-ribosyl)imidazole-4-carboxamide. The protein operates within amino-acid biosynthesis; L-histidine biosynthesis; L-histidine from 5-phospho-alpha-D-ribose 1-diphosphate: step 4/9. This chain is 1-(5-phosphoribosyl)-5-[(5-phosphoribosylamino)methylideneamino] imidazole-4-carboxamide isomerase, found in Bacteroides fragilis (strain YCH46).